The primary structure comprises 565 residues: Phospholipase B-like protein C (565 aa).

Positions 1–21 are cleaved as a signal peptide; that stretch reads MNKIIILISLFLNFLFGYVVC. N-linked (GlcNAc...) asparagine glycans are attached at residues Asn53, Asn84, Asn118, Asn200, Asn201, Asn211, Asn266, Asn302, Asn406, and Asn485.

It belongs to the phospholipase B-like family.

Its subcellular location is the secreted. Probable phospholipase. The chain is Phospholipase B-like protein C (plbC) from Dictyostelium discoideum (Social amoeba).